A 473-amino-acid chain; its full sequence is Inactive FRIGIDA-like protein 2 (473 aa).

Coiled-coil stretches lie at residues 3 to 35 and 306 to 361; these read AAES…RSLL and SLKV…RATK. The interval 356-384 is disordered; it reads RKRATKFNSPANPQQPQEQKVDNKRPRVA. The span at 361–373 shows a compositional bias: polar residues; it reads KFNSPANPQQPQE.

Belongs to the Frigida family. In terms of tissue distribution, expressed at low levels throughout the plant, with slightly higher expression in developing seeds and the highest expression in pollen.

Its function is as follows. Inactive FRIGIDA-like 2 protein. In Arabidopsis thaliana (Mouse-ear cress), this protein is Inactive FRIGIDA-like protein 2 (FRL2).